Here is a 640-residue protein sequence, read N- to C-terminus: 1,4-alpha-glucan branching enzyme GlgB (640 aa).

The active-site Nucleophile is Asp317. The Proton donor role is filled by Glu370.

Belongs to the glycosyl hydrolase 13 family. GlgB subfamily. Monomer.

It carries out the reaction Transfers a segment of a (1-&gt;4)-alpha-D-glucan chain to a primary hydroxy group in a similar glucan chain.. The protein operates within glycan biosynthesis; glycogen biosynthesis. Its function is as follows. Catalyzes the formation of the alpha-1,6-glucosidic linkages in glycogen by scission of a 1,4-alpha-linked oligosaccharide from growing alpha-1,4-glucan chains and the subsequent attachment of the oligosaccharide to the alpha-1,6 position. The protein is 1,4-alpha-glucan branching enzyme GlgB of Nitratidesulfovibrio vulgaris (strain ATCC 29579 / DSM 644 / CCUG 34227 / NCIMB 8303 / VKM B-1760 / Hildenborough) (Desulfovibrio vulgaris).